The primary structure comprises 196 residues: Metalloproteinase inhibitor 2 (196 aa).

The N-terminal stretch at 1–2 (RA) is a signal peptide. Residue C3 coordinates Zn(2+). Involved in metalloproteinase-binding stretches follow at residues 3-6 (CSCS) and 71-72 (SA). 6 cysteine pairs are disulfide-bonded: C3–C74, C5–C103, C15–C128, C130–C177, C135–C140, and C148–C169. One can recognise an NTR domain in the interval 3–128 (CSCSPVHPQQ…SLNHRYQMGC (126 aa)).

The protein belongs to the protease inhibitor I35 (TIMP) family. In terms of assembly, interacts (via the C-terminal) with MMP2 (via the C-terminal PEX domain); the interaction inhibits the MMP2 activity. In terms of processing, the activity of TIMP2 is dependent on the presence of disulfide bonds.

The protein resides in the secreted. Its function is as follows. Complexes with metalloproteinases (such as collagenases) and irreversibly inactivates them by binding to their catalytic zinc cofactor. The polypeptide is Metalloproteinase inhibitor 2 (TIMP2) (Cricetulus longicaudatus (Long-tailed dwarf hamster)).